The chain runs to 168 residues: Large ribosomal subunit protein uL10 (168 aa).

The protein belongs to the universal ribosomal protein uL10 family. As to quaternary structure, part of the ribosomal stalk of the 50S ribosomal subunit. The N-terminus interacts with L11 and the large rRNA to form the base of the stalk. The C-terminus forms an elongated spine to which L12 dimers bind in a sequential fashion forming a multimeric L10(L12)X complex.

Forms part of the ribosomal stalk, playing a central role in the interaction of the ribosome with GTP-bound translation factors. This chain is Large ribosomal subunit protein uL10, found in Paracidovorax citrulli (strain AAC00-1) (Acidovorax citrulli).